Here is a 209-residue protein sequence, read N- to C-terminus: Inner membrane protein YjdF (209 aa).

Topologically, residues 1 to 7 (MTRTLKP) are periplasmic. The chain crosses the membrane as a helical span at residues 8–28 (LILNTSALTLTLILIYTGISA). Topologically, residues 29-31 (HDK) are cytoplasmic. The chain crosses the membrane as a helical span at residues 32-52 (LTWLMEVTPVIIVVQLLLATA). Residues 53–55 (RRY) lie on the Periplasmic side of the membrane. A helical transmembrane segment spans residues 56–76 (PLTPLLYTLIFLHAIILMVGG). Residues 77-131 (QYTYAKVPVGFEVQEWLGLSRNPYDKLGHFFQGLVPALVAREILVRGMYVRGRKM) lie on the Cytoplasmic side of the membrane. The chain crosses the membrane as a helical span at residues 132 to 152 (VAFLVCCVALAISAMYELIEW). Topologically, residues 153-177 (WAALAMGQGADDFLGTQGDQWDTQS) are periplasmic. The chain crosses the membrane as a helical span at residues 178–198 (DMFCALLGALTTVIFLARFHC). Over 199-209 (RQLRRFGLITG) the chain is Cytoplasmic.

It is found in the cell inner membrane. This is Inner membrane protein YjdF (yjdF) from Escherichia coli (strain K12).